The following is a 255-amino-acid chain: 5'-nucleotidase SurE (255 aa).

Asp-8, Asp-9, Ser-40, and Asn-92 together coordinate a divalent metal cation.

It belongs to the SurE nucleotidase family. A divalent metal cation serves as cofactor.

It is found in the cytoplasm. It carries out the reaction a ribonucleoside 5'-phosphate + H2O = a ribonucleoside + phosphate. Functionally, nucleotidase that shows phosphatase activity on nucleoside 5'-monophosphates. The sequence is that of 5'-nucleotidase SurE from Brucella abortus (strain S19).